We begin with the raw amino-acid sequence, 311 residues long: Probable cell division protein WhiA (311 aa).

The H-T-H motif DNA-binding region spans 277 to 311; the sequence is TLKEVADQIPDGPISKSGVNHRFKKLHELAETLKE.

This sequence belongs to the WhiA family.

Involved in cell division and chromosome segregation. The polypeptide is Probable cell division protein WhiA (Lactobacillus helveticus (strain DPC 4571)).